A 309-amino-acid polypeptide reads, in one-letter code: 4-hydroxy-tetrahydrodipicolinate synthase (309 aa).

Residue T51 participates in pyruvate binding. Catalysis depends on Y140, which acts as the Proton donor/acceptor. K168 serves as the catalytic Schiff-base intermediate with substrate. Residue I209 participates in pyruvate binding.

The protein belongs to the DapA family. Homotetramer; dimer of dimers.

It localises to the cytoplasm. The enzyme catalyses L-aspartate 4-semialdehyde + pyruvate = (2S,4S)-4-hydroxy-2,3,4,5-tetrahydrodipicolinate + H2O + H(+). The protein operates within amino-acid biosynthesis; L-lysine biosynthesis via DAP pathway; (S)-tetrahydrodipicolinate from L-aspartate: step 3/4. Its function is as follows. Catalyzes the condensation of (S)-aspartate-beta-semialdehyde [(S)-ASA] and pyruvate to 4-hydroxy-tetrahydrodipicolinate (HTPA). The sequence is that of 4-hydroxy-tetrahydrodipicolinate synthase from Streptococcus uberis (strain ATCC BAA-854 / 0140J).